We begin with the raw amino-acid sequence, 48 residues long: MNFGNKIKCSICKKKIFLREKNLFFPFCSKKCKIIDLYQWISGKYKLF.

Positions 9, 12, 28, and 32 each coordinate Zn(2+).

It belongs to the DNA gyrase inhibitor YacG family. In terms of assembly, interacts with GyrB. Zn(2+) serves as cofactor.

Inhibits all the catalytic activities of DNA gyrase by preventing its interaction with DNA. Acts by binding directly to the C-terminal domain of GyrB, which probably disrupts DNA binding by the gyrase. The protein is DNA gyrase inhibitor YacG of Wigglesworthia glossinidia brevipalpis.